Reading from the N-terminus, the 216-residue chain is Small ribosomal subunit protein uS3c (216 aa).

The region spanning 43–118 (IKNYIQKNIR…KLNIAIVKIT (76 aa)) is the KH type-2 domain.

This sequence belongs to the universal ribosomal protein uS3 family. Part of the 30S ribosomal subunit.

The protein resides in the plastid. It is found in the chloroplast. This is Small ribosomal subunit protein uS3c (rps3) from Phaseolus vulgaris (Kidney bean).